The chain runs to 335 residues: Aspartate--ammonia ligase (335 aa).

This sequence belongs to the class-II aminoacyl-tRNA synthetase family. AsnA subfamily.

It localises to the cytoplasm. The catalysed reaction is L-aspartate + NH4(+) + ATP = L-asparagine + AMP + diphosphate + H(+). It functions in the pathway amino-acid biosynthesis; L-asparagine biosynthesis; L-asparagine from L-aspartate (ammonia route): step 1/1. The protein is Aspartate--ammonia ligase of Pediococcus pentosaceus (strain ATCC 25745 / CCUG 21536 / LMG 10740 / 183-1w).